The primary structure comprises 265 residues: Thiazole synthase (265 aa).

Residue lysine 103 is the Schiff-base intermediate with DXP of the active site. 1-deoxy-D-xylulose 5-phosphate-binding positions include glycine 164, 190-191, and 212-213; these read AG and NT.

This sequence belongs to the ThiG family. As to quaternary structure, homotetramer. Forms heterodimers with either ThiH or ThiS.

It localises to the cytoplasm. It carries out the reaction [ThiS sulfur-carrier protein]-C-terminal-Gly-aminoethanethioate + 2-iminoacetate + 1-deoxy-D-xylulose 5-phosphate = [ThiS sulfur-carrier protein]-C-terminal Gly-Gly + 2-[(2R,5Z)-2-carboxy-4-methylthiazol-5(2H)-ylidene]ethyl phosphate + 2 H2O + H(+). It participates in cofactor biosynthesis; thiamine diphosphate biosynthesis. Functionally, catalyzes the rearrangement of 1-deoxy-D-xylulose 5-phosphate (DXP) to produce the thiazole phosphate moiety of thiamine. Sulfur is provided by the thiocarboxylate moiety of the carrier protein ThiS. In vitro, sulfur can be provided by H(2)S. The protein is Thiazole synthase of Bordetella avium (strain 197N).